Reading from the N-terminus, the 174-residue chain is Co-chaperone protein HscB homolog (174 aa).

Positions 2-74 (NYFNLFNFTP…LRRAEHLLSL (73 aa)) constitute a J domain.

It belongs to the HscB family. As to quaternary structure, interacts with HscA and stimulates its ATPase activity.

Co-chaperone involved in the maturation of iron-sulfur cluster-containing proteins. Seems to help targeting proteins to be folded toward HscA. The chain is Co-chaperone protein HscB homolog from Shewanella denitrificans (strain OS217 / ATCC BAA-1090 / DSM 15013).